The following is a 244-amino-acid chain: tRNA pseudouridine synthase A (244 aa).

The Nucleophile role is filled by aspartate 55. Tyrosine 113 is a binding site for substrate.

Belongs to the tRNA pseudouridine synthase TruA family. As to quaternary structure, homodimer.

The catalysed reaction is uridine(38/39/40) in tRNA = pseudouridine(38/39/40) in tRNA. Functionally, formation of pseudouridine at positions 38, 39 and 40 in the anticodon stem and loop of transfer RNAs. The chain is tRNA pseudouridine synthase A from Phytoplasma mali (strain AT).